The primary structure comprises 504 residues: Ribonuclease Y (504 aa).

Residues 194 to 279 (TVHVVSLPND…EMVEKAKQEV (86 aa)) enclose the KH domain. Positions 320–413 (VLKHSMEVAY…VQAADAISAA (94 aa)) constitute an HD domain.

Belongs to the RNase Y family.

Its function is as follows. Endoribonuclease that initiates mRNA decay. In Clostridium novyi (strain NT), this protein is Ribonuclease Y.